Consider the following 298-residue polypeptide: GTPase Era (298 aa).

One can recognise an Era-type G domain in the interval 3–170; that stretch reads KSGFVAILGR…VQLLKDNLEE (168 aa). The G1 stretch occupies residues 11-18; that stretch reads GRPNVGKS. GTP is bound at residue 11 to 18; that stretch reads GRPNVGKS. The G2 stretch occupies residues 37–41; it reads QTTRN. The segment at 58-61 is G3; that stretch reads DTPG. Residues 58–62 and 120–123 each bind GTP; these read DTPGI and NKID. Residues 120–123 are G4; the sequence is NKID. A G5 region spans residues 149–151; that stretch reads ISA. The region spanning 201–279 is the KH type-2 domain; sequence TQQEVPHSVA…YLETWVKVKK (79 aa).

This sequence belongs to the TRAFAC class TrmE-Era-EngA-EngB-Septin-like GTPase superfamily. Era GTPase family. As to quaternary structure, monomer.

The protein resides in the cytoplasm. It localises to the cell membrane. Functionally, an essential GTPase that binds both GDP and GTP, with rapid nucleotide exchange. Plays a role in 16S rRNA processing and 30S ribosomal subunit biogenesis and possibly also in cell cycle regulation and energy metabolism. In Streptococcus equi subsp. equi (strain 4047), this protein is GTPase Era.